Here is a 244-residue protein sequence, read N- to C-terminus: tRNA (guanine-N(7)-)-methyltransferase (244 aa).

Positions 1–24 (MTDSHVPHPESPAVEEGEERPHRR) are disordered. Residues Glu-74, Glu-99, Asp-126, and Asp-149 each contribute to the S-adenosyl-L-methionine site. Asp-149 is a catalytic residue. Residues Lys-153, Asp-185, and 222–225 (TKFE) contribute to the substrate site.

Belongs to the class I-like SAM-binding methyltransferase superfamily. TrmB family.

The enzyme catalyses guanosine(46) in tRNA + S-adenosyl-L-methionine = N(7)-methylguanosine(46) in tRNA + S-adenosyl-L-homocysteine. The protein operates within tRNA modification; N(7)-methylguanine-tRNA biosynthesis. Its function is as follows. Catalyzes the formation of N(7)-methylguanine at position 46 (m7G46) in tRNA. This Pseudomonas savastanoi pv. phaseolicola (strain 1448A / Race 6) (Pseudomonas syringae pv. phaseolicola (strain 1448A / Race 6)) protein is tRNA (guanine-N(7)-)-methyltransferase.